The sequence spans 392 residues: Protein FAM53C (392 aa).

Methionine 1 is modified (N-acetylmethionine). The segment at 78–119 (LRPPSRGNSPKEQPFSQVLRPEPPDPEKLPVPPAPPSKRHCR) is disordered. Positions 83-93 (RGNSPKEQPFS) are enriched in polar residues. Phosphoserine occurs at positions 122, 162, 232, 234, 255, and 273. Disordered stretches follow at residues 141–167 (LWTP…PKRV) and 204–294 (RPCA…EDPR). Residues 241 to 256 (ASRFLPSARSSPASSP) show a composition bias toward low complexity. Over residues 278 to 294 (LDARKTGVKRRHEEDPR) the composition is skewed to basic and acidic residues. Phosphoserine is present on serine 299. Residues 341–364 (ASCSPTGGSSQVLSESEEEEEGAV) form a disordered region.

It belongs to the FAM53 family.

The protein is Protein FAM53C of Homo sapiens (Human).